A 328-amino-acid polypeptide reads, in one-letter code: Thiamine-monophosphate kinase (328 aa).

Mg(2+) contacts are provided by Asp30, Thr45, Thr46, and Asp47. His54 contributes to the substrate binding site. Residues Asp75 and Asp122 each contribute to the Mg(2+) site. ATP-binding positions include 121-122 and Arg146; that span reads GD. Asp211 serves as a coordination point for Mg(2+). Ser213 lines the ATP pocket. Asp214 contacts Mg(2+). 2 residues coordinate substrate: Glu262 and Phe321.

Belongs to the thiamine-monophosphate kinase family.

It carries out the reaction thiamine phosphate + ATP = thiamine diphosphate + ADP. It participates in cofactor biosynthesis; thiamine diphosphate biosynthesis; thiamine diphosphate from thiamine phosphate: step 1/1. Catalyzes the ATP-dependent phosphorylation of thiamine-monophosphate (TMP) to form thiamine-pyrophosphate (TPP), the active form of vitamin B1. The chain is Thiamine-monophosphate kinase from Haemophilus influenzae (strain ATCC 51907 / DSM 11121 / KW20 / Rd).